A 58-amino-acid polypeptide reads, in one-letter code: MAVPKKKTSKSKRDKRKATWKRKAALQAQRALSLGKSVLTGRAKGFVYPAQDEEETEE.

Residues 1–24 (MAVPKKKTSKSKRDKRKATWKRKA) form a disordered region.

This sequence belongs to the bacterial ribosomal protein bL32 family.

The protein is Large ribosomal subunit protein bL32 of Synechococcus sp. (strain ATCC 27144 / PCC 6301 / SAUG 1402/1) (Anacystis nidulans).